Consider the following 555-residue polypeptide: 6-phosphofructo-2-kinase/fructose-2,6-bisphosphatase 3 (555 aa).

The segment at 1 to 245 is 6-phosphofructo-2-kinase; it reads MPLELTQSRV…VYYLMNIHVQ (245 aa). Residue 42-50 participates in ATP binding; it reads GLPARGKTY. Beta-D-fructose 6-phosphate is bound by residues Arg-75 and Arg-99. The active site involves Asp-125. The beta-D-fructose 6-phosphate site is built by Thr-127 and Arg-133. Residue Cys-155 is part of the active site. ATP is bound at residue 164 to 169; sequence NIMEVK. Beta-D-fructose 6-phosphate is bound by residues Lys-169, Arg-190, and Tyr-194. Positions 246–555 are fructose-2,6-bisphosphatase; sequence PRTIYLCRHG…CHIFSKFSPY (310 aa). Arg-253 contributes to the beta-D-fructose 2,6-bisphosphate binding site. His-254 functions as the Tele-phosphohistidine intermediate in the catalytic mechanism. Residues Asn-260 and Gly-266 each coordinate beta-D-fructose 2,6-bisphosphate. The active-site Proton donor/acceptor is the Glu-323. Residues Tyr-334, Arg-348, Lys-352, Tyr-363, Gln-389, and Arg-393 each contribute to the beta-D-fructose 2,6-bisphosphate site. An ATP-binding site is contributed by 345–348; the sequence is YALR. ATP is bound by residues 389-393 and Tyr-425; that span reads QAVLR. The segment at 475–504 is disordered; it reads KQDAKKGPNPLMRRNSVTPLASPEPTKKPR. Ser-490 carries the post-translational modification Phosphoserine; by AMPK and PKA. A Phosphothreonine modification is found at Thr-492. At Ser-496 the chain carries Phosphoserine.

The protein in the C-terminal section; belongs to the phosphoglycerate mutase family. As to quaternary structure, homodimer. Forms a heterodimer with PFKFB2. Phosphorylation by AMPK stimulates activity.

It carries out the reaction beta-D-fructose 2,6-bisphosphate + H2O = beta-D-fructose 6-phosphate + phosphate. The catalysed reaction is beta-D-fructose 6-phosphate + ATP = beta-D-fructose 2,6-bisphosphate + ADP + H(+). In terms of biological role, catalyzes both the synthesis and degradation of fructose 2,6-bisphosphate. This is 6-phosphofructo-2-kinase/fructose-2,6-bisphosphatase 3 (Pfkfb3) from Rattus norvegicus (Rat).